The following is a 542-amino-acid chain: Phosphoacetylglucosamine mutase (542 aa).

The residue at position 1 (M1) is an N-acetylmethionine. Position 62 is a phosphothreonine (T62). Catalysis depends on S64, which acts as the Phosphoserine intermediate. Positions 64, 276, 278, and 280 each coordinate Mg(2+). S64 is modified (phosphoserine). Substrate is bound by residues 370 to 372, 496 to 500, and R505; these read EAN and RPSGT.

The protein belongs to the phosphohexose mutase family. Mg(2+) is required as a cofactor.

It catalyses the reaction N-acetyl-alpha-D-glucosamine 1-phosphate = N-acetyl-D-glucosamine 6-phosphate. The protein operates within nucleotide-sugar biosynthesis; UDP-N-acetyl-alpha-D-glucosamine biosynthesis; N-acetyl-alpha-D-glucosamine 1-phosphate from alpha-D-glucosamine 6-phosphate (route I): step 2/2. Its activity is regulated as follows. Inhibited by Mn(2+), Cd(2+), Zn(2+), Cu(2+) and Be(2+). Its function is as follows. Catalyzes the conversion of GlcNAc-6-P into GlcNAc-1-P during the synthesis of uridine diphosphate/UDP-GlcNAc, a sugar nucleotide critical to multiple glycosylation pathways including protein N- and O-glycosylation. This Sus scrofa (Pig) protein is Phosphoacetylglucosamine mutase.